The primary structure comprises 290 residues: Protein translocase subunit SecF (290 aa).

6 consecutive transmembrane segments (helical) span residues 15–35 (VFMILSLLFVIIGMYFFFTKG), 131–151 (KAILAAVLAIIVMLVYITVRF), 156–176 (AISAIINEAFVLLATISIFAI), 184–204 (SFIAAILTLLGYAINDNIIVF), 234–256 (TLYTVITTLLAITPLLIWGGVVL), and 260–282 (ILAIYLGIIIGTYSTIYIASAIL).

Belongs to the SecD/SecF family. SecF subfamily. In terms of assembly, forms a complex with SecD. Part of the essential Sec protein translocation apparatus which comprises SecA, SecYEG and auxiliary proteins SecDF. Other proteins may also be involved.

The protein localises to the cell inner membrane. In terms of biological role, part of the Sec protein translocase complex. Interacts with the SecYEG preprotein conducting channel. SecDF uses the proton motive force (PMF) to complete protein translocation after the ATP-dependent function of SecA. In Dictyoglomus turgidum (strain DSM 6724 / Z-1310), this protein is Protein translocase subunit SecF.